The following is a 44-amino-acid chain: uncharacterized protein (44 aa).

Its subcellular location is the plastid. It is found in the chloroplast. This is an uncharacterized protein from Trieres chinensis (Marine centric diatom).